Consider the following 260-residue polypeptide: MLRQFCIQVVIVSTQSKANFTPRRGGFTFKQFFVAHDRCAMKVGTDGVLLGAWAPLAQAQRVLDIGSGSGLIALMLAQRTAENVQIDAVELDEAAAAQAHDNVLESPWSLRIQVHAQDIHHFAQHHAGQYDLIVSNPPYFEPAVACRDQARHNARYTETLTHDALLASAEQLIVPQGTFCVVLPHDIGEAFETNAHRRGWHTAQRLNVSDRADTPMHRVLLALTRQPAEEATEQKLAIKLADGSYTDDFRRLITDFYLFY.

This sequence belongs to the methyltransferase superfamily. tRNA (adenine-N(6)-)-methyltransferase family.

It is found in the cytoplasm. The enzyme catalyses adenosine(37) in tRNA1(Val) + S-adenosyl-L-methionine = N(6)-methyladenosine(37) in tRNA1(Val) + S-adenosyl-L-homocysteine + H(+). Functionally, specifically methylates the adenine in position 37 of tRNA(1)(Val) (anticodon cmo5UAC). The polypeptide is tRNA1(Val) (adenine(37)-N6)-methyltransferase (Serratia proteamaculans (strain 568)).